Consider the following 157-residue polypeptide: Transcriptional repressor NrdR (157 aa).

Residues 1–26 (MRCPKCGGSKSSVIDSRQAEDGNTIR) are disordered. A zinc finger lies at 3-34 (CPKCGGSKSSVIDSRQAEDGNTIRRRRECEDC). The span at 17–26 (RQAEDGNTIR) shows a compositional bias: basic and acidic residues. Residues 49–139 (LVVVKKDGTR…VYRSFKDVGE (91 aa)) form the ATP-cone domain.

This sequence belongs to the NrdR family. The cofactor is Zn(2+).

Functionally, negatively regulates transcription of bacterial ribonucleotide reductase nrd genes and operons by binding to NrdR-boxes. In Streptococcus gordonii (strain Challis / ATCC 35105 / BCRC 15272 / CH1 / DL1 / V288), this protein is Transcriptional repressor NrdR.